The following is a 147-amino-acid chain: Hemoglobin subunit epsilon (147 aa).

In terms of domain architecture, Globin spans 3–147 (HWSAEEKQLI…VAHALARKYH (145 aa)). His64 and His93 together coordinate heme b.

Belongs to the globin family. As to quaternary structure, heterotetramer of two epsilon chains and two alpha chains. Hemoglobin E (Hbe) contains a alpha-A chains while hemoglobin M (Hbm) contains alpha-D chains.

Functionally, beta-type chain found in early embryos. The chain is Hemoglobin subunit epsilon (HBE) from Gallus gallus (Chicken).